The primary structure comprises 468 residues: Zinc finger CCCH domain-containing protein 32 (468 aa).

The disordered stretch occupies residues 1-25 (MYARNPPLNGSQSAQAPDWTPADAD). C3H1-type zinc fingers lie at residues 45–73 (RPGA…HPRD), 90–118 (RFGE…HPKN), 136–164 (REGD…HPQP), 289–317 (RPGE…HPRD), and 335–363 (RPGV…HPMG).

The protein localises to the nucleus. The protein is Zinc finger CCCH domain-containing protein 32 of Arabidopsis thaliana (Mouse-ear cress).